Reading from the N-terminus, the 535-residue chain is Light-independent protochlorophyllide reductase subunit B (535 aa).

D36 contacts [4Fe-4S] cluster. The active-site Proton donor is the D292. 428 to 429 (GL) contacts substrate. The segment at 446 to 483 (DEASPSESAPHASNGHEDVAGGSTAQSVPSHAATEGDG) is disordered.

Belongs to the ChlB/BchB/BchZ family. In terms of assembly, protochlorophyllide reductase is composed of three subunits; BchL, BchN and BchB. Forms a heterotetramer of two BchB and two BchN subunits. [4Fe-4S] cluster serves as cofactor.

The catalysed reaction is chlorophyllide a + oxidized 2[4Fe-4S]-[ferredoxin] + 2 ADP + 2 phosphate = protochlorophyllide a + reduced 2[4Fe-4S]-[ferredoxin] + 2 ATP + 2 H2O. Its pathway is porphyrin-containing compound metabolism; bacteriochlorophyll biosynthesis (light-independent). In terms of biological role, component of the dark-operative protochlorophyllide reductase (DPOR) that uses Mg-ATP and reduced ferredoxin to reduce ring D of protochlorophyllide (Pchlide) to form chlorophyllide a (Chlide). This reaction is light-independent. The NB-protein (BchN-BchB) is the catalytic component of the complex. This chain is Light-independent protochlorophyllide reductase subunit B, found in Chlorobium limicola (strain DSM 245 / NBRC 103803 / 6330).